A 503-amino-acid polypeptide reads, in one-letter code: Maturase K (503 aa).

This sequence belongs to the intron maturase 2 family. MatK subfamily.

The protein resides in the plastid. It is found in the chloroplast. Its function is as follows. Usually encoded in the trnK tRNA gene intron. Probably assists in splicing its own and other chloroplast group II introns. In Rhamnus cathartica (Common buckthorn), this protein is Maturase K.